The chain runs to 170 residues: Acireductone dioxygenase (170 aa).

Residues H99, H101, E105, and H144 each contribute to the Fe(2+) site. Residues H99, H101, E105, and H144 each contribute to the Ni(2+) site.

This sequence belongs to the acireductone dioxygenase (ARD) family. As to quaternary structure, monomer. Fe(2+) serves as cofactor. The cofactor is Ni(2+).

It catalyses the reaction 1,2-dihydroxy-5-(methylsulfanyl)pent-1-en-3-one + O2 = 3-(methylsulfanyl)propanoate + CO + formate + 2 H(+). It carries out the reaction 1,2-dihydroxy-5-(methylsulfanyl)pent-1-en-3-one + O2 = 4-methylsulfanyl-2-oxobutanoate + formate + 2 H(+). Its pathway is amino-acid biosynthesis; L-methionine biosynthesis via salvage pathway; L-methionine from S-methyl-5-thio-alpha-D-ribose 1-phosphate: step 5/6. Catalyzes 2 different reactions between oxygen and the acireductone 1,2-dihydroxy-3-keto-5-methylthiopentene (DHK-MTPene) depending upon the metal bound in the active site. Fe-containing acireductone dioxygenase (Fe-ARD) produces formate and 2-keto-4-methylthiobutyrate (KMTB), the alpha-ketoacid precursor of methionine in the methionine recycle pathway. Ni-containing acireductone dioxygenase (Ni-ARD) produces methylthiopropionate, carbon monoxide and formate, and does not lie on the methionine recycle pathway. This Bacillus thuringiensis (strain Al Hakam) protein is Acireductone dioxygenase.